Here is a 722-residue protein sequence, read N- to C-terminus: Polyribonucleotide nucleotidyltransferase (722 aa).

The Mg(2+) site is built by D487 and D493. In terms of domain architecture, KH spans P554–I613. The S1 motif domain occupies G623 to K691. The interval T697–E722 is disordered. A compositionally biased stretch (basic and acidic residues) spans L701–G713.

Belongs to the polyribonucleotide nucleotidyltransferase family. It depends on Mg(2+) as a cofactor.

The protein resides in the cytoplasm. The catalysed reaction is RNA(n+1) + phosphate = RNA(n) + a ribonucleoside 5'-diphosphate. In terms of biological role, involved in mRNA degradation. Catalyzes the phosphorolysis of single-stranded polyribonucleotides processively in the 3'- to 5'-direction. In Rhodopseudomonas palustris (strain ATCC BAA-98 / CGA009), this protein is Polyribonucleotide nucleotidyltransferase.